The primary structure comprises 113 residues: Hydrogenase maturation factor HypA (113 aa).

Position 2 (H2) interacts with Ni(2+). Zn(2+) is bound by residues C73, C76, C89, and C92.

This sequence belongs to the HypA/HybF family.

Functionally, involved in the maturation of [NiFe] hydrogenases. Required for nickel insertion into the metal center of the hydrogenase. The protein is Hydrogenase maturation factor HypA of Cereibacter sphaeroides (Rhodobacter sphaeroides).